Reading from the N-terminus, the 315-residue chain is Petrobactin import system permease protein YclO (315 aa).

9 consecutive transmembrane segments (helical) span residues 7–27, 40–60, 76–96, 100–120, 128–148, 172–192, 223–243, 262–282, and 288–308; these read IALL…YDLG, VAAI…FQTI, LYML…MVIM, INFI…YQIM, IFFL…LSSF, INTD…VYVW, LIVV…IMFL, YLIA…QFVV, and FSTT…IYLL.

It belongs to the binding-protein-dependent transport system permease family. FecCD subfamily. In terms of assembly, the complex is composed of two ATP-binding proteins (YclP), two transmembrane proteins (YclN and YclO) and a solute-binding protein (YclQ).

It is found in the cell membrane. Functionally, part of the ABC transporter complex YclNOPQ involved in uptake of ferric-petrobactin. Petrobactin is a photoreactive 3,4-catecholate siderophore produced by many members of the B.cereus group, including B.anthracis. Probably responsible for the translocation of the substrate across the membrane. The polypeptide is Petrobactin import system permease protein YclO (yclO) (Bacillus subtilis (strain 168)).